We begin with the raw amino-acid sequence, 477 residues long: MELYDLTIHELRDLLRKEEVSPEEVLDSFYKRIDEVEDKVKAYVTLTRDEARNSLASLKDGRLAGIPLAIKDNISTRGIKTTCSSKILNNYKPPYDATVVKRLKEEGGITLGKTNMDEFAMGSSTENSGFYPTHNPWNLDHAPGGSSGGSAAAVAAGEAPGALGSDTGGSIRQPAAFCGVVGLKPTYGCVSRYGLVAFASSLDQIGPITKDVTDSALLLNVISGHDPMDSTSVDREKEDYTTYLKDDVKGMKIGLPEEYFSLDFNSEVKDKVMSAVKELEKAGAIVEEVSLPNIEYALAAYYIIAPAEASSNLARYDGVRYGYRSENGDSVRSMFTNTRSEGFGDEVKRRIMLGTYVLSSGYYDAFYLKAQKVRTLIKEDFERVFKDYDVLISPTTPTTAFKLGEMTDPLEMYQSDVFTVPVNIAGIPAISVPCGFDSNNLPIGLQIMGPHFGEGKILQTAYTLEQALNMKTKRPKL.

Catalysis depends on charge relay system residues K71 and S146. S170 (acyl-ester intermediate) is an active-site residue.

This sequence belongs to the amidase family. GatA subfamily. In terms of assembly, heterotrimer of A, B and C subunits.

The enzyme catalyses L-glutamyl-tRNA(Gln) + L-glutamine + ATP + H2O = L-glutaminyl-tRNA(Gln) + L-glutamate + ADP + phosphate + H(+). Its function is as follows. Allows the formation of correctly charged Gln-tRNA(Gln) through the transamidation of misacylated Glu-tRNA(Gln) in organisms which lack glutaminyl-tRNA synthetase. The reaction takes place in the presence of glutamine and ATP through an activated gamma-phospho-Glu-tRNA(Gln). The chain is Glutamyl-tRNA(Gln) amidotransferase subunit A from Halothermothrix orenii (strain H 168 / OCM 544 / DSM 9562).